The primary structure comprises 313 residues: FAM172 family protein homolog Y75B8A.31 (313 aa).

Positions 293–313 (VKSENSKESDDEAPKSKKICV) are disordered. Positions 296-307 (ENSKESDDEAPK) are enriched in basic and acidic residues.

This sequence belongs to the FAM172 family.

This Caenorhabditis elegans protein is FAM172 family protein homolog Y75B8A.31.